We begin with the raw amino-acid sequence, 34 residues long: Turripeptide OL127 (34 aa).

In terms of processing, contains 4 disulfide bonds. In terms of tissue distribution, expressed by the venom duct.

Its subcellular location is the secreted. Acts as a neurotoxin by inhibiting an ion channel. The polypeptide is Turripeptide OL127 (Iotyrris olangoensis (Sea snail)).